The following is a 359-amino-acid chain: 4-hydroxy-3-methylbut-2-en-1-yl diphosphate synthase (flavodoxin) (359 aa).

Cys265, Cys268, Cys300, and Glu307 together coordinate [4Fe-4S] cluster.

The protein belongs to the IspG family. Requires [4Fe-4S] cluster as cofactor.

The catalysed reaction is (2E)-4-hydroxy-3-methylbut-2-enyl diphosphate + oxidized [flavodoxin] + H2O + 2 H(+) = 2-C-methyl-D-erythritol 2,4-cyclic diphosphate + reduced [flavodoxin]. It participates in isoprenoid biosynthesis; isopentenyl diphosphate biosynthesis via DXP pathway; isopentenyl diphosphate from 1-deoxy-D-xylulose 5-phosphate: step 5/6. Its function is as follows. Converts 2C-methyl-D-erythritol 2,4-cyclodiphosphate (ME-2,4cPP) into 1-hydroxy-2-methyl-2-(E)-butenyl 4-diphosphate. The protein is 4-hydroxy-3-methylbut-2-en-1-yl diphosphate synthase (flavodoxin) of Lawsonia intracellularis (strain PHE/MN1-00).